Consider the following 770-residue polypeptide: Protein PAT1 homolog 1 (770 aa).

The disordered stretch occupies residues 1 to 26; it reads MFRYESLEDCPLDEDEDAFQGLGEED. Residues 1 to 84 form a region A; interaction with DDX6/RCK region; sequence MFRYESLEDC…EMDLLGDHEE (84 aa). The interval 1–397 is involved in nuclear foci localization; it reads MFRYESLEDC…HRSSHQDHLR (397 aa). Positions 7 to 26 are enriched in acidic residues; sequence LEDCPLDEDEDAFQGLGEED. Residues 85 to 388 are region N; interaction with decapping machinery; it reads NLAERLSKMV…LNGAGDRGSH (304 aa). The Nuclear export signal motif lies at 86–95; it reads LAERLSKMVI. Ser177 is modified (phosphoserine). The residue at position 178 (Thr178) is a Phosphothreonine. A phosphoserine mark is found at Ser179 and Ser184. The residue at position 194 (Thr194) is a Phosphothreonine. Arg217, Arg223, and Arg263 each carry asymmetric dimethylarginine. Residues 223 to 397 form an involved in RNA-binding region; it reads RYPAPYGERM…HRSSHQDHLR (175 aa). At Ser278 the chain carries Phosphoserine. Arg284 carries the asymmetric dimethylarginine modification. 2 disordered regions span residues 315–344 and 360–400; these read FRAFFSAPPSATPPPQQHPPGPGPHLQNLR and QHRR…RKDP. Residues 324 to 337 are compositionally biased toward pro residues; it reads SATPPPQQHPPGPG. Positions 367 to 380 are enriched in low complexity; it reads QRQQQNRNQHRNLN. Residue Arg385 is modified to Omega-N-methylarginine. Residues 385–400 show a composition bias toward basic and acidic residues; sequence RGSHRSSHQDHLRKDP. The region H stretch occupies residues 389-448; sequence RSSHQDHLRKDPYANLMLQREKDWVSKIQMMQLQSTDPYLDDFYYQNYFEKLEKLSAAEE. Positions 398 to 770 are involved in nuclear speckle localization; the sequence is KDPYANLMLQ…TKLQLVQGIR (373 aa). Positions 449–770 are region C; the sequence is IQGDGPKKER…TKLQLVQGIR (322 aa).

Belongs to the PAT1 family. As to quaternary structure, interacts (via region A) with DDX6/RCK. Interacts (via region H and region C) with LSM1 and LSM4. Interacts (via region N) with DCP1A, DCP2, EDC3, EDC4 and XRN1. Interacts with the CCR4-NOT complex. Interacts with the Lsm-containing SMN-Sm protein complex. Interacts with EIF4ENIF1/4E-T.

Its subcellular location is the cytoplasm. It localises to the P-body. It is found in the nucleus. The protein localises to the PML body. The protein resides in the nucleus speckle. In terms of biological role, RNA-binding protein involved in deadenylation-dependent decapping of mRNAs, leading to the degradation of mRNAs. Acts as a scaffold protein that connects deadenylation and decapping machinery. Required for cytoplasmic mRNA processing body (P-body) assembly. The protein is Protein PAT1 homolog 1 (PATL1) of Pongo abelii (Sumatran orangutan).